The sequence spans 394 residues: Elongation factor Tu (394 aa).

One can recognise a tr-type G domain in the interval 10–204 (KPHINVGTIG…SLDKYIPIPV (195 aa)). Residues 19–26 (GHVDHGKT) form a G1 region. A GTP-binding site is contributed by 19-26 (GHVDHGKT). T26 contacts Mg(2+). Residues 60–64 (GITIN) are G2. The interval 81 to 84 (DCPG) is G3. Residues 81 to 85 (DCPGH) and 136 to 139 (NKCD) each bind GTP. Residues 136-139 (NKCD) form a G4 region. The interval 174–176 (SAL) is G5.

This sequence belongs to the TRAFAC class translation factor GTPase superfamily. Classic translation factor GTPase family. EF-Tu/EF-1A subfamily. Monomer.

The protein resides in the cytoplasm. The enzyme catalyses GTP + H2O = GDP + phosphate + H(+). GTP hydrolase that promotes the GTP-dependent binding of aminoacyl-tRNA to the A-site of ribosomes during protein biosynthesis. This chain is Elongation factor Tu, found in Buchnera aphidicola subsp. Cinara cedri (strain Cc).